The sequence spans 772 residues: Semaphorin-3A (772 aa).

The signal sequence occupies residues methionine 1–alanine 20. A Sema domain is found at arginine 31–leucine 514. An N-linked (GlcNAc...) asparagine glycan is attached at asparagine 53. Cysteine 103 and cysteine 114 form a disulfide bridge. N-linked (GlcNAc...) asparagine glycosylation is present at asparagine 125. 4 disulfides stabilise this stretch: cysteine 132–cysteine 141, cysteine 269–cysteine 381, cysteine 293–cysteine 341, and cysteine 517–cysteine 535. The 87-residue stretch at proline 579–threonine 665 folds into the Ig-like C2-type domain. Asparagine 591 carries an N-linked (GlcNAc...) asparagine glycan. Residues cysteine 650 and cysteine 723 are joined by a disulfide bond. Residues arginine 729–proline 738 are compositionally biased toward basic residues. A disordered region spans residues arginine 729 to valine 772. Residues histidine 750 to valine 772 are compositionally biased toward basic and acidic residues.

The protein belongs to the semaphorin family. Interacts with PXND1.

The protein localises to the secreted. Plays a role in growth cones guidance. May function to pattern sensory projections by selectively repelling axons that normally terminate dorsally. Involved in the development of the olfactory system and in neuronal control of puberty. The protein is Semaphorin-3A (Sema3a) of Mus musculus (Mouse).